The sequence spans 337 residues: Trace amine-associated receptor 5 (337 aa).

Residues methionine 1–glutamine 34 are Extracellular-facing. Residue asparagine 21 is glycosylated (N-linked (GlcNAc...) asparagine). Cystine bridges form between cysteine 24-cysteine 188 and cysteine 99-cysteine 192. The chain crosses the membrane as a helical span at residues leucine 35–valine 55. The Cytoplasmic segment spans residues alanine 56–asparagine 70. A helical membrane pass occupies residues phenylalanine 71–serine 91. Over threonine 92–leucine 109 the chain is Extracellular. Residues histidine 110–isoleucine 130 traverse the membrane as a helical segment. Over aspartate 131–tyrosine 154 the chain is Cytoplasmic. A helical transmembrane segment spans residues isoleucine 155–valine 175. Residues glutamate 176 to valine 189 are extracellular Loop 2 (ECL2). Residues glutamate 176–asparagine 204 are Extracellular-facing. A helical membrane pass occupies residues phenylalanine 205 to valine 225. The Cytoplasmic portion of the chain corresponds to alanine 226–threonine 253. The chain crosses the membrane as a helical span at residues leucine 254–valine 274. Residues aspartate 275–proline 284 lie on the Extracellular side of the membrane. Residues leucine 285–phenylalanine 307 form a helical membrane-spanning segment. Over serine 308–glutamate 337 the chain is Cytoplasmic.

This sequence belongs to the G-protein coupled receptor 1 family. As to expression, expressed almost exclusively in skeletal muscle and selected areas of the brain, such amygdala, hippocampus, caudate nucleus, thalamus and hypothalamus. Weak expression is also find in substantia nigra.

The protein resides in the cell membrane. Its function is as follows. Olfactory receptor specific for trimethylamine, a trace amine. Also activated at lower level by dimethylethylamine. Trimethylamine is a bacterial metabolite found in some animal odors, and to humans it is a repulsive odor associated with bad breath and spoiled food. Trimethylamine-binding causes a conformation change that triggers signaling via G(s)-class of G alpha proteins (GNAL or GNAS). In Homo sapiens (Human), this protein is Trace amine-associated receptor 5.